A 278-amino-acid chain; its full sequence is MQQPVNYPCPQIYWVDSSATSPWAPPGSVFSCPSSGPRGPGQRRPPPPPPPPSPLPPPSQPPPLPPLSPLKKKDNIELWLPVIFFMVLVALVGMGLGMYQLFHLQKELAELREFTNHSLRVSSFEKQIANPSTPSETKKPRSVAHLTGNPRSRSIPLEWEDTYGTALISGVKYKKGGLVINEAGLYFVYSKVYFRGQSCNSQPLSHKVYMRNFKYPGDLVLMEEKKLNYCTTGQIWAHSSYLGAVFNLTVADHLYVNISQLSLINFEESKTFFGLYKL.

At 1–77 the chain is on the cytoplasmic side; sequence MQQPVNYPCP…SPLKKKDNIE (77 aa). Residues 26 to 68 are disordered; it reads PGSVFSCPSSGPRGPGQRRPPPPPPPPSPLPPPSQPPPLPPLS. Low complexity predominate over residues 33–42; that stretch reads PSSGPRGPGQ. Over residues 43–68 the composition is skewed to pro residues; the sequence is RRPPPPPPPPSPLPPPSQPPPLPPLS. A helical; Signal-anchor for type II membrane protein membrane pass occupies residues 78–99; that stretch reads LWLPVIFFMVLVALVGMGLGMY. Over 100–278 the chain is Extracellular; sequence QLFHLQKELA…SKTFFGLYKL (179 aa). N116 carries an N-linked (GlcNAc...) asparagine glycan. Over residues 125-135 the composition is skewed to polar residues; sequence EKQIANPSTPS. A disordered region spans residues 125–147; that stretch reads EKQIANPSTPSETKKPRSVAHLT. Positions 142–278 constitute a THD domain; it reads SVAHLTGNPR…SKTFFGLYKL (137 aa). An intrachain disulfide couples C199 to C230. N-linked (GlcNAc...) asparagine glycosylation is found at N247 and N257.

It belongs to the tumor necrosis factor family. In terms of assembly, homotrimer. Interacts with ARHGAP9, BAIAP2L1, BTK, CACNB3, CACNB4, CRK, DLG2, DNMBP, DOCK4, EPS8L3, FGR, FYB1, FYN, HCK, ITK, ITSN2, KALRN, LYN, MACC1, MIA, MPP4, MYO15A, NCF1, NCK1, NCK2, NCKIPSD, OSTF1, PIK3R1, PSTPIP1, RIMBP3C, SAMSN1, SH3GL3, SH3PXD2B, SH3PXD2A, SH3RF2, SKAP2, SNX33, SNX9, SORBS3, SPTA1, SRC, SRGAP1, SRGAP2, SRGAP3, TEC, TJP3 and YES1. The soluble form derives from the membrane form by proteolytic processing. The membrane-bound form undergoes two successive intramembrane proteolytic cleavages. The first one is processed by ADAM10 producing an N-terminal fragment, which lacks the receptor-binding extracellular domain. This ADAM10-processed FasL (FasL APL) remnant form is still membrane anchored and further processed by SPPL2A that liberates the FasL intracellular domain (FasL ICD). FasL shedding by ADAM10 is a prerequisite for subsequent intramembrane cleavage by SPPL2A in T-cells. Post-translationally, phosphorylated by FGR on tyrosine residues; this is required for ubiquitination and subsequent internalization. In terms of processing, N-glycosylated. Monoubiquitinated. In terms of tissue distribution, expressed in activated splenocytes and thymocytes. Moderate or weak expression found in small intestines, kidney and lung.

It is found in the cell membrane. It localises to the cytoplasmic vesicle lumen. The protein localises to the lysosome lumen. The protein resides in the secreted. Its subcellular location is the nucleus. Cytokine that binds to TNFRSF6/FAS, a receptor that transduces the apoptotic signal into cells. Involved in cytotoxic T-cell-mediated apoptosis, natural killer cell-mediated apoptosis and in T-cell development. Initiates fratricidal/suicidal activation-induced cell death (AICD) in antigen-activated T-cells contributing to the termination of immune responses. TNFRSF6/FAS-mediated apoptosis also has a role in the induction of peripheral tolerance. Binds to TNFRSF6B/DcR3, a decoy receptor that blocks apoptosis. Its function is as follows. Induces FAS-mediated activation of NF-kappa-B, initiating non-apoptotic signaling pathways. Can induce apoptosis but does not appear to be essential for this process. Functionally, cytoplasmic form induces gene transcription inhibition. The protein is Tumor necrosis factor ligand superfamily member 6 (Faslg) of Rattus norvegicus (Rat).